The chain runs to 192 residues: MKLVFASNNKNKIAEIQSMLPESITILSLEDINCFEDIPETADTIEGNAILKADYVTQKYGYDCFADDTGLEVDAINGEPGVYSARYAGEQKNADDNMNKLLKALENNKNRSAQFKTVITLNLEGKQYIFTGIAKGEITETKTGTNGFGYDPIFKPENFDKTFAELPLEIKNTIGHRGKAVQQLIDLLTATK.

7–12 (SNNKNK) provides a ligand contact to substrate. D68 serves as the catalytic Proton acceptor. D68 serves as a coordination point for Mg(2+). Substrate-binding positions include T69, 148–151 (FGYD), K171, and 176–177 (HR).

Belongs to the HAM1 NTPase family. Homodimer. Mg(2+) serves as cofactor.

The catalysed reaction is XTP + H2O = XMP + diphosphate + H(+). It catalyses the reaction dITP + H2O = dIMP + diphosphate + H(+). The enzyme catalyses ITP + H2O = IMP + diphosphate + H(+). In terms of biological role, pyrophosphatase that catalyzes the hydrolysis of nucleoside triphosphates to their monophosphate derivatives, with a high preference for the non-canonical purine nucleotides XTP (xanthosine triphosphate), dITP (deoxyinosine triphosphate) and ITP. Seems to function as a house-cleaning enzyme that removes non-canonical purine nucleotides from the nucleotide pool, thus preventing their incorporation into DNA/RNA and avoiding chromosomal lesions. In Flavobacterium johnsoniae (strain ATCC 17061 / DSM 2064 / JCM 8514 / BCRC 14874 / CCUG 350202 / NBRC 14942 / NCIMB 11054 / UW101) (Cytophaga johnsonae), this protein is dITP/XTP pyrophosphatase.